Reading from the N-terminus, the 319-residue chain is Ankyrin repeat domain-containing protein 1 (319 aa).

Residues 55 to 89 (LGEEQRKSEKVREAELKKKKLEQRSKLENLEDLEI) are a coiled coil. ANK repeat units follow at residues 152 to 181 (YKRT…QIEF), 185 to 214 (LEST…KISA), 218 to 247 (LLST…DLNA), 251 to 280 (EGDT…DLNV), and 284 to 315 (AGKT…KNSR).

Interacts with TTN/titin. Interacts with YBX1. Expressed in heart, cardiac muscle.

Its subcellular location is the nucleus. Functionally, may play an important role in endothelial cell activation. May act as a nuclear transcription factor that negatively regulates the expression of cardiac genes. The sequence is that of Ankyrin repeat domain-containing protein 1 (Ankrd1) from Rattus norvegicus (Rat).